A 592-amino-acid chain; its full sequence is MYLNACRALTLISVLSLLACNSEPEKKQATPSKEIAKAQTGSWGDQGDGTYINPILNADYPDSDIEQVGDTYYMITSKQHMSPGMPILESKDMVNWTNVGHVFNSLSWAPEYNWDRMNGYSFGTWAGDLAYHEGTWYCYQIDYQHGLMVATSKDIKGPWSKPIMMLPKSEVLDDPAVFWDEDTHKAYIIINTAGKQKEASNTIEGNENRIYEMSWDGTKILDEGKLVYTGMGAEAAKIYKIDGTWYIFLAQWTMGDMSTKPGVKNPKNDRKQIVLRSKESIYGPYEVKTVLEKGTVFNNRSASQGALMQAPDNSWWYMHQLIQNDDIPFQGRPQCLEPVTWVDGWPIIGVDEDNDGIGEPVKTYKKPIDGYPVTAPRTDDDFSSPKLGFQWEWNHNPRNTHWSLTERPGWLRLKASKVLPNEKGYGPNINEWTNNDGSDSDFWRANNTLSQRIMGITTGTAVAKFDVSGMKPHQLAGFVRYGGVFNLLGVEVDEHGKKHLFYMEPMGEKTVGPEITVNDLYIRTSNRSNQAIYEYSFDGKNFKRFGPTFTIAFGKWTGDRLGLFSWNDKEDAGYIDVDWFTYDYDGPKAANQ.

The N-terminal stretch at 1–19 is a signal peptide; it reads MYLNACRALTLISVLSLLA. Cys20 is lipidated: N-palmitoyl cysteine. The S-diacylglycerol cysteine moiety is linked to residue Cys20.

This sequence belongs to the glycosyl hydrolase 43 family.

The protein resides in the cell outer membrane. In terms of biological role, xylosidase involved in ulvan degradation. Ulvan is the main polysaccharide component of the Ulvales (green seaweed) cell wall. It is composed of disaccharide building blocks comprising 3-sulfated rhamnose (Rha3S) linked to D-glucuronic acid (GlcA), L-iduronic acid (IduA), or D-xylose (Xyl). Beta-xylosidase converts Xyl-Rha3S, a product of alpha-L-rhamnosidase acting on Rha-Xyl-Rha3S oligosaccharides, further to Xyl and Rha3S. This Formosa agariphila (strain DSM 15362 / KCTC 12365 / LMG 23005 / KMM 3901 / M-2Alg 35-1) protein is Beta-xylosidase.